The primary structure comprises 428 residues: Putative oxidoreductase YteT (428 aa).

Residues Met1 to Glu23 form the signal peptide.

It belongs to the Gfo/Idh/MocA family.

May play a role in the degradation of type I rhamnogalacturonan derived from plant cell walls. The polypeptide is Putative oxidoreductase YteT (yteT) (Bacillus subtilis (strain 168)).